A 530-amino-acid chain; its full sequence is NMDA receptor synaptonuclear signaling and neuronal migration factor (530 aa).

G2 carries N-myristoyl glycine lipidation. Residues 2–233 (GAAASRRRAL…FSFQTATTTM (232 aa)) form a necessary and sufficient to elicit dendritic processes and synaptic contacts region. Disordered stretches follow at residues 34 to 67 (SQSH…APQN) and 125 to 197 (KGRR…GRRK). A compositionally biased stretch (basic and acidic residues) spans 38 to 48 (PENRNGADHLL). Basic residues predominate over residues 125 to 137 (KGRRQRHPHHHSQ). Positions 153–162 (PCQSWAGSRQ) are enriched in polar residues. At S204 the chain carries Phosphoserine. Positions 247–250 (RRKR) match the Nuclear localization signal motif. The disordered stretch occupies residues 285–312 (RSFSRSWSDPTPMKADTSHDSRDSSDLQ). Phosphoserine occurs at positions 290 and 292. The span at 300–309 (DTSHDSRDSS) shows a compositional bias: basic and acidic residues.

It belongs to the NSMF family. In terms of assembly, interacts with KPNA1; the interaction occurs in a calcium-independent manner after synaptic NMDA receptor stimulation and is required for nuclear import of NSMF but is competed by CABP1. Interacts (via the central NLS-containing motif region) with CABP1 (via EF-hands 1 and 2); the interaction occurs in a calcium-dependent manner after synaptic NMDA receptor stimulation and prevents the nuclear import of NSMF. Cannot be competed by calmodulin. In terms of processing, proteolytically processed after NMDA receptor activation. Cleaved in a calcium-dependent and calpain-sensitive manner. Calpain cleavage is essential for the translocation process from dendrites to the nucleus. As to expression, highly expressed in adult and fetal brain. Weakly expressed in heart, liver, spleen, testis, small intestine, skeletal muscle, peripheral white blood cells and kidney.

The protein resides in the nucleus. Its subcellular location is the nucleus envelope. It is found in the nucleus membrane. It localises to the nucleus matrix. The protein localises to the cytoplasm. The protein resides in the cell cortex. Its subcellular location is the cytoskeleton. It is found in the cell membrane. It localises to the cell projection. The protein localises to the dendrite. The protein resides in the synapse. Its subcellular location is the synaptosome. It is found in the postsynaptic density. It localises to the membrane. Its function is as follows. Couples NMDA-sensitive glutamate receptor signaling to the nucleus and triggers long-lasting changes in the cytoarchitecture of dendrites and spine synapse processes. Part of the cAMP response element-binding protein (CREB) shut-off signaling pathway. Stimulates outgrowth of olfactory axons and migration of gonadotropin-releasing hormone (GnRH) and luteinizing-hormone-releasing hormone (LHRH) neuronal cells. The chain is NMDA receptor synaptonuclear signaling and neuronal migration factor (NSMF) from Homo sapiens (Human).